Consider the following 182-residue polypeptide: Translation initiation factor IF-3 (182 aa).

This sequence belongs to the IF-3 family. In terms of assembly, monomer.

It localises to the cytoplasm. IF-3 binds to the 30S ribosomal subunit and shifts the equilibrium between 70S ribosomes and their 50S and 30S subunits in favor of the free subunits, thus enhancing the availability of 30S subunits on which protein synthesis initiation begins. The polypeptide is Translation initiation factor IF-3 (Tropheryma whipplei (strain TW08/27) (Whipple's bacillus)).